The sequence spans 513 residues: Zinc finger CCCH-type with G patch domain-containing protein (513 aa).

The C3H1-type zinc-finger motif lies at 155–178 (PCSYYLEGECRFDEAKCRFSHGAL). 2 stretches are compositionally biased toward acidic residues: residues 252 to 261 (DQDEDDELSS) and 273 to 283 (SDEAESDMDDL). The interval 252 to 283 (DQDEDDELSSEESTSSMRDASSDEAESDMDDL) is disordered. A G-patch domain is found at 312–358 (TRGIGSKLMEKMGYIHGTGLGSEGRGIVTPVSAQILPQGRSLDACME). Disordered regions lie at residues 411-430 (PGES…NNEL) and 477-513 (QVQM…MFEF). Residues 477-495 (QVQMQSHKQELATLQAQER) are compositionally biased toward polar residues. The segment covering 496–513 (SLSKEQQTRKSKNKMFEF) has biased composition (basic and acidic residues).

The protein resides in the nucleus. Its function is as follows. Transcription repressor. This Drosophila sechellia (Fruit fly) protein is Zinc finger CCCH-type with G patch domain-containing protein.